The chain runs to 517 residues: Probable bifunctional methylthioribulose-1-phosphate dehydratase/enolase-phosphatase E1 1 (517 aa).

The interval 1–240 (MAAAALNGLK…AIKLYQLGLD (240 aa)) is methylthioribulose-1-phosphate dehydratase. Position 112 (cysteine 112) interacts with substrate. Positions 130 and 132 each coordinate Zn(2+). The active-site Proton donor/acceptor; for methylthioribulose-1-phosphate dehydratase activity is the glutamate 155. Histidine 205 contributes to the Zn(2+) binding site. Positions 278–517 (IVLDIEGTTT…FKTITSFSDI (240 aa)) are enolase-phosphatase E1. 2 residues coordinate Mg(2+): aspartate 281 and glutamate 283. Substrate is bound by residues 416–417 (SS) and lysine 450. Aspartate 476 is a Mg(2+) binding site.

It in the N-terminal section; belongs to the aldolase class II family. MtnB subfamily. In the C-terminal section; belongs to the HAD-like hydrolase superfamily. MasA/MtnC family. It depends on Zn(2+) as a cofactor. Requires Mg(2+) as cofactor.

The catalysed reaction is 5-(methylsulfanyl)-D-ribulose 1-phosphate = 5-methylsulfanyl-2,3-dioxopentyl phosphate + H2O. It carries out the reaction 5-methylsulfanyl-2,3-dioxopentyl phosphate + H2O = 1,2-dihydroxy-5-(methylsulfanyl)pent-1-en-3-one + phosphate. It participates in amino-acid biosynthesis; L-methionine biosynthesis via salvage pathway; L-methionine from S-methyl-5-thio-alpha-D-ribose 1-phosphate: step 2/6. The protein operates within amino-acid biosynthesis; L-methionine biosynthesis via salvage pathway; L-methionine from S-methyl-5-thio-alpha-D-ribose 1-phosphate: step 3/6. It functions in the pathway amino-acid biosynthesis; L-methionine biosynthesis via salvage pathway; L-methionine from S-methyl-5-thio-alpha-D-ribose 1-phosphate: step 4/6. The polypeptide is Probable bifunctional methylthioribulose-1-phosphate dehydratase/enolase-phosphatase E1 1 (Vitis vinifera (Grape)).